A 384-amino-acid chain; its full sequence is 4-hydroxy-3-methylbut-2-en-1-yl diphosphate synthase (flavodoxin) (384 aa).

[4Fe-4S] cluster is bound by residues cysteine 272, cysteine 275, cysteine 307, and glutamate 314.

This sequence belongs to the IspG family. [4Fe-4S] cluster serves as cofactor.

The catalysed reaction is (2E)-4-hydroxy-3-methylbut-2-enyl diphosphate + oxidized [flavodoxin] + H2O + 2 H(+) = 2-C-methyl-D-erythritol 2,4-cyclic diphosphate + reduced [flavodoxin]. The protein operates within isoprenoid biosynthesis; isopentenyl diphosphate biosynthesis via DXP pathway; isopentenyl diphosphate from 1-deoxy-D-xylulose 5-phosphate: step 5/6. Converts 2C-methyl-D-erythritol 2,4-cyclodiphosphate (ME-2,4cPP) into 1-hydroxy-2-methyl-2-(E)-butenyl 4-diphosphate. This is 4-hydroxy-3-methylbut-2-en-1-yl diphosphate synthase (flavodoxin) from Rhodospirillum rubrum (strain ATCC 11170 / ATH 1.1.1 / DSM 467 / LMG 4362 / NCIMB 8255 / S1).